The chain runs to 31 residues: Cytochrome b6-f complex subunit 6 (31 aa).

Residues L4–G24 traverse the membrane as a helical segment.

This sequence belongs to the PetL family. The 4 large subunits of the cytochrome b6-f complex are cytochrome b6, subunit IV (17 kDa polypeptide, PetD), cytochrome f and the Rieske protein, while the 4 small subunits are PetG, PetL, PetM and PetN. The complex functions as a dimer.

It is found in the plastid. It localises to the chloroplast thylakoid membrane. Component of the cytochrome b6-f complex, which mediates electron transfer between photosystem II (PSII) and photosystem I (PSI), cyclic electron flow around PSI, and state transitions. PetL is important for photoautotrophic growth as well as for electron transfer efficiency and stability of the cytochrome b6-f complex. The sequence is that of Cytochrome b6-f complex subunit 6 from Oxybasis rubra (Red goosefoot).